The following is a 129-amino-acid chain: NADH-quinone oxidoreductase subunit A (129 aa).

3 helical membrane passes run 14–34 (LAIH…VAAL), 67–87 (FLIA…FAWA), and 95–115 (WFGL…LVYL).

Belongs to the complex I subunit 3 family. NDH-1 is composed of 14 different subunits. Subunits NuoA, H, J, K, L, M, N constitute the membrane sector of the complex.

It localises to the cell inner membrane. It carries out the reaction a quinone + NADH + 5 H(+)(in) = a quinol + NAD(+) + 4 H(+)(out). In terms of biological role, NDH-1 shuttles electrons from NADH, via FMN and iron-sulfur (Fe-S) centers, to quinones in the respiratory chain. The immediate electron acceptor for the enzyme in this species is believed to be ubiquinone. Couples the redox reaction to proton translocation (for every two electrons transferred, four hydrogen ions are translocated across the cytoplasmic membrane), and thus conserves the redox energy in a proton gradient. This is NADH-quinone oxidoreductase subunit A from Rhodopseudomonas palustris (strain HaA2).